Consider the following 855-residue polypeptide: Cone cGMP-specific 3',5'-cyclic phosphodiesterase subunit alpha' (855 aa).

GAF domains follow at residues 70 to 219 and 251 to 428; these read SVEL…SIIL and DVER…GWSL. Residues Ser-92, Ser-116, 164–167, and Thr-171 each bind 3',5'-cyclic GMP; that span reads DKQT. Residues 481-814 form the PDEase domain; it reads EEKQLVTILK…VEWKSLADEY (334 aa). The active-site Proton donor is the His-557. A divalent metal cation-binding residues include His-561, His-597, Asp-598, and Asp-718. The segment at 823–855 is disordered; sequence EMKKQEEGNTTEKAVEDSGGGGDDKKSKTCLML. A Cysteine methyl ester modification is found at Cys-852. The S-geranylgeranyl cysteine moiety is linked to residue Cys-852. The propeptide at 853 to 855 is removed in mature form; that stretch reads LML.

Belongs to the cyclic nucleotide phosphodiesterase family. As to quaternary structure, composed of two alpha' subunits that are associated with 3 smaller proteins of 11, 13, and 15 kDa. Requires a divalent metal cation as cofactor.

It is found in the cell membrane. It catalyses the reaction 3',5'-cyclic GMP + H2O = GMP + H(+). In terms of biological role, as cone-specific cGMP phosphodiesterase, it plays an essential role in light detection and cone phototransduction by rapidly decreasing intracellular levels of cGMP. The chain is Cone cGMP-specific 3',5'-cyclic phosphodiesterase subunit alpha' (PDE6C) from Bos taurus (Bovine).